The following is a 167-amino-acid chain: Large ribosomal subunit protein uL10 (167 aa).

Belongs to the universal ribosomal protein uL10 family. Part of the ribosomal stalk of the 50S ribosomal subunit. The N-terminus interacts with L11 and the large rRNA to form the base of the stalk. The C-terminus forms an elongated spine to which L12 dimers bind in a sequential fashion forming a multimeric L10(L12)X complex.

In terms of biological role, forms part of the ribosomal stalk, playing a central role in the interaction of the ribosome with GTP-bound translation factors. The sequence is that of Large ribosomal subunit protein uL10 from Erwinia tasmaniensis (strain DSM 17950 / CFBP 7177 / CIP 109463 / NCPPB 4357 / Et1/99).